The following is a 155-amino-acid chain: Endoribonuclease YbeY (155 aa).

Zn(2+) contacts are provided by histidine 113, histidine 117, and histidine 123.

The protein belongs to the endoribonuclease YbeY family. Zn(2+) serves as cofactor.

It localises to the cytoplasm. Single strand-specific metallo-endoribonuclease involved in late-stage 70S ribosome quality control and in maturation of the 3' terminus of the 16S rRNA. The chain is Endoribonuclease YbeY from Ureaplasma parvum serovar 3 (strain ATCC 27815 / 27 / NCTC 11736).